The sequence spans 274 residues: Coagulation factor IX (274 aa).

Tyrosine 23 bears the Sulfotyrosine mark. The N-linked (GlcNAc...) asparagine glycan is linked to asparagine 25. At serine 26 the chain carries Phosphoserine. Residue asparagine 35 is glycosylated (N-linked (GlcNAc...) asparagine). Threonine 37 carries an O-linked (GalNAc...) threonine glycan. The N-linked (GlcNAc...) asparagine glycan is linked to asparagine 40. Residues 49–274 (VVGGEDAARG…IYTKVSRYEV (226 aa)) form the Peptidase S1 domain. Cysteine 74 and cysteine 90 are joined by a disulfide. Histidine 89 functions as the Charge relay system in the catalytic mechanism. Ca(2+)-binding residues include glutamate 103, asparagine 105, glutamate 110, and glutamate 113. Residue asparagine 128 is glycosylated (N-linked (GlcNAc...) asparagine). Residue aspartate 137 is the Charge relay system of the active site. 2 cysteine pairs are disulfide-bonded: cysteine 204-cysteine 218 and cysteine 229-cysteine 257. Serine 233 functions as the Charge relay system in the catalytic mechanism.

This sequence belongs to the peptidase S1 family. In terms of assembly, heterodimer of a light chain and a heavy chain; disulfide-linked. Interacts (inactive and activated) with F11 (activated) in calcium-dependent manner. Interacts with SERPINC1. Activated by factor XIa, which excises the activation peptide. The propeptide can also be removed by snake venom protease. Activated by coagulation factor VIIa-tissue factor (F7-F3) complex in calcium-dependent manner.

The protein localises to the secreted. The enzyme catalyses Selective cleavage of Arg-|-Ile bond in factor X to form factor Xa.. In terms of biological role, factor IX is a vitamin K-dependent plasma protein that participates in the intrinsic pathway of blood coagulation by converting factor X to its active form in the presence of Ca(2+) ions, phospholipids, and factor VIIIa. The protein is Coagulation factor IX (F9) of Ovis aries (Sheep).